Consider the following 146-residue polypeptide: Leghemoglobin alpha (146 aa).

The region spanning 3–146 (AFTEKQEALV…LAAAIKKAYA (144 aa)) is the Globin domain. Residues Tyr-26 and Tyr-31 each carry the nitrated tyrosine modification. Ser-46 contributes to the heme b binding site. The residue at position 46 (Ser-46) is a Phosphoserine. O2 is bound at residue His-62. His-93 and Lys-96 together coordinate heme b. The residue at position 134 (Tyr-134) is a Nitrated tyrosine.

The protein belongs to the plant globin family. Monomer. Nitrated mainly at Tyr-31 and, to a lower extent, at Tyr-26 and Tyr-134, in effective nodules and particularly in hypoxic conditions; this mechanism may play a protective role in the symbiosis by buffering toxic peroxynitrite NO(2)(-). Nitration level decrease during nodule senescence. Post-translationally, phosphorylation at Ser-46 disrupts the molecular environment of its porphyrin ring oxygen binding pocket, thus leading to a reduced oxygen consumption and to the delivery of oxygen O(2) to symbiosomes. In terms of tissue distribution, root nodules.

The protein resides in the cytoplasm. Its subcellular location is the cytosol. It is found in the nucleus. Leghemoglobin that reversibly binds oxygen O(2) through a pentacoordinated heme iron. In root nodules, facilitates the diffusion of oxygen to the bacteroids while preventing the bacterial nitrogenase from being inactivated by buffering dioxygen, nitric oxide and carbon monoxide, and promoting the formation of reactive oxygen species (ROS, e.g. H(2)O(2)). This role is essential for symbiotic nitrogen fixation (SNF). The protein is Leghemoglobin alpha of Phaseolus vulgaris (Kidney bean).